The chain runs to 349 residues: Isopentenyl-diphosphate delta-isomerase (349 aa).

6 to 7 contributes to the substrate binding site; it reads RK. Residues 62 to 64, Ser-93, and Asn-122 each bind FMN; that span reads AMT. Gln-152 serves as a coordination point for substrate. Mg(2+) is bound at residue Glu-153. Residues Lys-184, Thr-214, 258-259, and 280-281 contribute to the FMN site; these read GG and AG.

This sequence belongs to the IPP isomerase type 2 family. Homooctamer. Dimer of tetramers. It depends on FMN as a cofactor. NADPH is required as a cofactor. The cofactor is Mg(2+).

It is found in the cytoplasm. The catalysed reaction is isopentenyl diphosphate = dimethylallyl diphosphate. Functionally, involved in the biosynthesis of isoprenoids. Catalyzes the 1,3-allylic rearrangement of the homoallylic substrate isopentenyl (IPP) to its allylic isomer, dimethylallyl diphosphate (DMAPP). In Bacillus subtilis (strain 168), this protein is Isopentenyl-diphosphate delta-isomerase.